The following is a 561-amino-acid chain: AT-rich interactive domain-containing protein 3B (561 aa).

M1 bears the N-acetylmethionine mark. Low complexity predominate over residues 1 to 17 (MEPLQQQQQQQQQQQKQ). Disordered stretches follow at residues 1–36 (MEPL…QQMR), 53–122 (LSAT…SKYF), and 136–179 (PMSN…WNLD). S89 is subject to Phosphoserine. A compositionally biased stretch (acidic residues) spans 90 to 109 (EPEEEDGGLEDEDGDDEVAE). Positions 152-162 (QAKEDHTKDAS) are enriched in basic and acidic residues. Positions 164–178 (ASPSVSTAGQPNWNL) are enriched in polar residues. S165 carries the phosphoserine modification. Residues 203–365 (SRDFAKLYEL…SPPKIRFPIL (163 aa)) are interaction with RB1. In terms of domain architecture, ARID spans 215–307 (DPERKEFLDD…YLYAYECEKK (93 aa)). Residue S311 is modified to Phosphoserine. An Asymmetric dimethylarginine modification is found at R361. The tract at residues 370–397 (SSGTNTSSPRISPATTLRKGDGAPVTTV) is disordered. Residues 419–517 (AALEQLRERL…GVLFAQKPVV (99 aa)) enclose the REKLES domain. Residues 490–513 (SSIGSINMSVDIDGTTYAGVLFAQ) form an interaction with ARID3A region. Over residues 523–552 (SAPQSLGSSASSSSSSHCSPSPTSSRGTPS) the composition is skewed to low complexity. The interval 523–561 (SAPQSLGSSASSSSSSHCSPSPTSSRGTPSAEPSTSWSL) is disordered.

Heterodimer with ARID3A. Interacts with unphosphorylated RB1. In terms of tissue distribution, expressed in placenta, testis and leukocytes. Expressed in neuroblastoma. Present in K-562 erythrocytic leukemia cell line (at protein level).

It localises to the nucleus. Transcription factor which may be involved in neuroblastoma growth and malignant transformation. Favors nuclear targeting of ARID3A. This chain is AT-rich interactive domain-containing protein 3B (ARID3B), found in Homo sapiens (Human).